The primary structure comprises 3094 residues: MAFLNVSAVPSCAFAPAFAPHAGASPIVPDSFPCVPRYSDDISHFRLTLSLDFSVPRPLSLNARVHLSASTDNPLPSLPLGFHAETFVLELNGSSAPFSIPSRHIDFVVNRPFSVFPTEVLSVSSLRTPSRLFALLCDFFLYCSKPGPCVEIASFSTPPPCLVSNCVAQIPTHAEMESIRFPTKTLPAGRFLQFHKRKYTKRPETLIIHESGLALKTSALGVTSKPNSRPITVKSASGEKYEAYEISRKDFERSRRRQQTPRVRSHKPRKINKAVEPFFFPEEPKKDKRKRASLPTEDEGFITFGTLRFPLSETPKEEPRLPKFREVEIPVVKKHAVPAVVSKPVRTFRPVATTGAEYVNARNQCSRRPRNHPILRSASYTFGFKKMPLQRFMKEKKEYYVKRSKVVSSCSVTKSPLEALASILKNLPQYSYNSERLKFYDHFIGDDFEIEVHPLRGGKLSVLLILPKGEAYCVVTAATPQYHAALTIARGDRPRVGELLQYRPGEGLCYLAHAALCCALQKRTFREEDFFVGMYPTKFVFAKRLTEKLGPSALKHPVRGRQVSRSLFHCDVASAFSSPFYSLPRFIGGVEEEAPEITSSLKHKAIESVYERVSIHKDNLLARSVEKDLIDFKDEIKSLSKEKRSVTVPFYMGEAVQSGLTRAYPQFNLSFTHSVYSDHPAAAGSRLLENETLASMAKSSFSDIGGCPLFHIKRGSTDYHVCRPIYDMKDAQRRVSRELQARGLVENLSREQLVEAQARVSVCPHTLGNCNVKSDVLIMVQVYDASLNEIASAMVLKESKVAYLTMVTPGELLDEREAFAIDALGCDVVVDTRRDMVQYKFGSSCYCHKLSNIKSIMLTPAFTFSGNLFSVEMYENRMGVNYYKITRSAYSPEIRGVKTLRYRRACTEVVQVKLPRFDKTLKTFLSGYDYIYLDAKFVSRVFDYVVSNCSVVNSKTFEWVWSYIKSSKSRVVISGKVIHRDVHIDLKHSECFAAVMLAVGVRSRTTTEFLAKNLNYYTGDASCFETIRFLFREWSRRAYAEINRSFRKLMKSILSAGLDYEFLDLDNSLQHLLEYSEVEVRVSIAQNGEVDCNEENRVLTEIIAEAADRKSIAQGLSGALSSVPTQPRGGLRGGSRRSGVSFLYNLVEEVGNLFFSVGDAVRFLVKVFKTFSDSPIFRVVRMFLDLAEAASPFVSVVSLCAWLREAVSAFSSWVADRTVSESVKTFVNRTVKRFLNFMSAKTLTKKFFRFFLSASALAKTVVRKAKVILEAYWEVWFESILSDSGEYSAVEFCSSVVITLLTNSGRLLPGFSPSAIITEVLLDLATKISIEVLLKQISPADSTASSALYRRVLSEILSNFRTMGEHGIFTKVFLLCGFLPVFVRKCVALCVPGDMATYARFLEYGVDDLFFLGRSVNSIKNYLCVVAAGLVDSIVDSVVLKLSGVAKERVLGFKSKIIKNFLNVFRKAKVVTRTSSSTDLSEDEYFSCDESKPGLRGGSSRFTLSRLLDIFFNFLKSSKLVIENACFSAYERIERNMKLYFFPLNSSEEEARRLIRCAGDFDYLSDSAFDEDEMLRQAFEQYYSSDDESVTYDGKPTVLRSYLNVSRRFLETFCNGPKFFVKVSNYFKALYSRLLRVLPWVDRNLSDSPGLKGGNEKALLAKFFKTCVITACECVSQICCLRLIRLCWGTPACGLVRLFYITYSSTRVLSRVVVAVAVCPLLVRNELDGLSDGLTNMGVSVFRRLFVALRRALSAYSNSALRRKIIEFIFGNIHHPFDVAVIETNEVAPEPLSPEVDIDVDCDFGSDSESVSSDEVASNPRPGLHGGSRRSSNFLTSLVKVVFKLARRIPRLLFRLRNFVAYFVERRLASKRLKTFIGLARLFDNFSLTSVVYLLQEYDSVLNAFIDVELILLNSGSVNVLPLVSWVRGSLTKLAEAIVGSGFASFLGRMCCRVSDWCSSSSNAGCNFMSPVRTKGKFVPPSSSGSTASMYERLEALESDIREHVLSTCRVGSDEEEERPKEVTEPGIEHTSEDVVPIRSHSQPLSGGECSYSEDREENERANLLPHVSKIVSERRGLETARRNKRTLHGVSEFLNAINTSNEQPRPIIVDHSPESRALTNSVREFYYLQELALFELSCKLREYYDQLKVANFNRQECLCDKDEDMFVLRAGQGVVSGRNSRLPLKHFKGHEFCFRSGGLVPYDGTSRVDTIFHTQTNFVSANALLSGYLSYRTFTFTNLSANVLLYEAPPGGGKTTTLIKVFCETFSKVNSLILTANKSSREEILAKVNRIVLDEGDTPLQTRDRILTIDSYLMNNRGLTCKVLYLDECFMVHAGAAVACIEFTKCDSAILFGDSRQIRYGRCSELDTAVLSDLNRFVDDESRVYGEVSYRCPWDVCAWLSTFYPKTVATTNLVSAGQSSMQVREIESVDDVEYSSEFVYLTMLQSEKKDLLKSFGKRSRSSVEKPTVLTVHEAQGETYRKVNLVRTKFQEDDPFRSENHITVALSRHVESLTYSVLSSKRDDAIAQAIVKAKQLVDAYRVYPTSFGGSTLDVSVNPSTSDRSKCKASSAPYEVINSFLESVVPGTTSVDFGDVSEEMGTQVFESGADNVVIRDSAPVNKSTDHDPQRVSSIRSQAIPKRKPSLQENLYSYESRNYNFTVCERFSGPQEFGQAMAMVMLERSFDLEKVAKVRSDVIAITEKGVRTWMSKREPSQLRALSSDLQKPLNLEEEITTFKLMVKRDAKVKLDSSCLVKHPPAQNIMFHRKAVNAIFSPCFDEFKNRVITCTNSNIVFFTEMTNSTLASIAKEMLGSEHVYNVGEIDFSKFDKSQDAFIKSFERTLYSAFGFDEDLLDVWMQGEYTSNATTLDGQLSFSVDNQRKSGASNTWIGNSIETLGILSMFYYTNRFKALFVSGDDSLIFSESPIRNSADAMCTELGFETKFLTPSVPYFCSKFFVMTGHDVFFVPDPYKLLVKLGASKDEVDDEFLFEVFTSFRDLTKDLVDERVIELLTHLVHSKYGYESGDTYAALCAIHCIRSNFSSFKKLYPKVKGWVVHYGKLKFVLRKFANCFREKFDTAFGERTFLLTTKLETVL.

Catalysis depends on for leader protease activity residues Cys-509 and His-569. Residues 622 to 647 adopt a coiled-coil conformation; it reads ARSVEKDLIDFKDEIKSLSKEKRSVT. The Alphavirus-like MT domain maps to 670-857; sequence SFTHSVYSDH…HKLSNIKSIM (188 aa). Residues 1807–1816 are compositionally biased toward low complexity; it reads DSESVSSDEV. The disordered stretch occupies residues 1807–1828; that stretch reads DSESVSSDEVASNPRPGLHGGS. Positions 2215–2387 constitute a (+)RNA virus helicase ATP-binding domain; the sequence is TQTNFVSANA…FVDDESRVYG (173 aa). The (+)RNA virus helicase C-terminal domain maps to 2388–2548; it reads EVSYRCPWDV…AYRVYPTSFG (161 aa). A RdRp catalytic domain is found at 2817 to 2930; that stretch reads YNVGEIDFSK…FSESPIRNSA (114 aa).

In terms of processing, the leader protease is released by autoproteolysis.

It localises to the host cytoplasmic vesicle membrane. The catalysed reaction is RNA(n) + a ribonucleoside 5'-triphosphate = RNA(n+1) + diphosphate. The enzyme catalyses ATP + H2O = ADP + phosphate + H(+). Its function is as follows. L-pro is involved in systemic transport and in RNA amplification. In terms of biological role, RNA-dependent RNA polymerase replicates the viral genome. In Beet yellows virus (isolate Ukraine) (BYV), this protein is Replicase polyprotein 1ab.